Here is a 530-residue protein sequence, read N- to C-terminus: UDP-glucuronosyltransferase 2B15 (530 aa).

An N-terminal signal peptide occupies residues 1–23 (MSLKWTSVFLLIQLSCYFSSGSC). The N-linked (GlcNAc...) asparagine glycan is linked to Asn-65. Lys-136 bears the N6-succinyllysine mark. Residues Asn-316 and Asn-483 are each glycosylated (N-linked (GlcNAc...) asparagine). A helical transmembrane segment spans residues 495–515 (IAFLLACVATVIFIITKFCLF).

The protein belongs to the UDP-glycosyltransferase family. Expressed in many tissues. Present in liver, prostate and testis.

The protein localises to the endoplasmic reticulum membrane. It catalyses the reaction glucuronate acceptor + UDP-alpha-D-glucuronate = acceptor beta-D-glucuronoside + UDP + H(+). The catalysed reaction is 17alpha-estradiol + UDP-alpha-D-glucuronate = 17alpha-estradiol 3-O-(beta-D-glucuronate) + UDP + H(+). It carries out the reaction 16alpha,17alpha-estriol + UDP-alpha-D-glucuronate = 16alpha,17alpha-estriol 3-O-(beta-D-glucuronate) + UDP + H(+). The enzyme catalyses 17beta-hydroxy-5alpha-androstan-3-one + UDP-alpha-D-glucuronate = 5alpha-dihydrotestosterone 17-O-(beta-D-glucuronate) + UDP + H(+). Its function is as follows. UDP-glucuronosyltransferase (UGT) that catalyzes phase II biotransformation reactions in which lipophilic substrates are conjugated with glucuronic acid to increase the metabolite's water solubility, thereby facilitating excretion into either the urine or bile. Essential for the elimination and detoxification of drugs, xenobiotics and endogenous compounds. Catalyzes the glucuronidation of endogenous steroid hormones such as androgens (testosterone, androsterone) and estrogens (estradiol, epiestradiol, estriol, catechol estrogens). Displays glucuronidation activity toward several classes of xenobiotic substrates, including phenolic compounds (eugenol, 4-nitrophenol, 4-hydroxybiphenyl) and phenylpropanoids (naringenin, coumarins). Catalyzes the glucuronidation of monoterpenoid alcohols such as borneol, menthol and isomenthol, a class of natural compounds used in essential oils. The chain is UDP-glucuronosyltransferase 2B15 from Homo sapiens (Human).